We begin with the raw amino-acid sequence, 125 residues long: Small ribosomal subunit protein uS13 (125 aa).

Belongs to the universal ribosomal protein uS13 family. As to quaternary structure, part of the 30S ribosomal subunit. Forms a loose heterodimer with protein S19. Forms two bridges to the 50S subunit in the 70S ribosome.

Located at the top of the head of the 30S subunit, it contacts several helices of the 16S rRNA. In the 70S ribosome it contacts the 23S rRNA (bridge B1a) and protein L5 of the 50S subunit (bridge B1b), connecting the 2 subunits; these bridges are implicated in subunit movement. Contacts the tRNAs in the A and P-sites. This Rickettsia felis (strain ATCC VR-1525 / URRWXCal2) (Rickettsia azadi) protein is Small ribosomal subunit protein uS13.